A 397-amino-acid chain; its full sequence is 1-deoxy-D-xylulose 5-phosphate reductoisomerase (397 aa).

Positions 12, 13, 14, 15, 38, 39, 40, and 126 each coordinate NADPH. Lys127 contributes to the 1-deoxy-D-xylulose 5-phosphate binding site. An NADPH-binding site is contributed by Glu128. Asp152 contributes to the Mn(2+) binding site. 4 residues coordinate 1-deoxy-D-xylulose 5-phosphate: Ser153, Glu154, Ser188, and His211. Glu154 contributes to the Mn(2+) binding site. Gly217 is a binding site for NADPH. 1-deoxy-D-xylulose 5-phosphate is bound by residues Ser224, Asn229, Lys230, and Glu233. Glu233 serves as a coordination point for Mn(2+).

It belongs to the DXR family. The cofactor is Mg(2+). It depends on Mn(2+) as a cofactor.

The catalysed reaction is 2-C-methyl-D-erythritol 4-phosphate + NADP(+) = 1-deoxy-D-xylulose 5-phosphate + NADPH + H(+). It functions in the pathway isoprenoid biosynthesis; isopentenyl diphosphate biosynthesis via DXP pathway; isopentenyl diphosphate from 1-deoxy-D-xylulose 5-phosphate: step 1/6. Functionally, catalyzes the NADPH-dependent rearrangement and reduction of 1-deoxy-D-xylulose-5-phosphate (DXP) to 2-C-methyl-D-erythritol 4-phosphate (MEP). The polypeptide is 1-deoxy-D-xylulose 5-phosphate reductoisomerase (Haemophilus influenzae (strain PittGG)).